An 84-amino-acid polypeptide reads, in one-letter code: Large ribosomal subunit protein uL23 (84 aa).

Belongs to the universal ribosomal protein uL23 family. Part of the 50S ribosomal subunit. Contacts protein L29.

Functionally, binds to 23S rRNA. One of the proteins that surrounds the polypeptide exit tunnel on the outside of the ribosome. The polypeptide is Large ribosomal subunit protein uL23 (Haloquadratum walsbyi (strain DSM 16790 / HBSQ001)).